The primary structure comprises 353 residues: COMPASS component SPP1 (353 aa).

The PHD-type zinc finger occupies 22–72 (DVYCICKRPDYGELMVGCDGCDDWFHFTCLHIPEQFKDLVFSFYCPYCQAG). Zn(2+) is bound by residues C25, C27, C39, C42, H47, C50, C66, and C69. Positions 83–124 (NGEGSLPKTLWKRKCRISDCYKPCLQDSKYCSEEHGREFVND) are non coventional C3H-type zinc finger. Residue S87 is modified to Phosphoserine. C97, C102, C113, and H117 together coordinate Zn(2+). A compositionally biased stretch (basic and acidic residues) spans 235–244 (VECGKEDSKG). The disordered stretch occupies residues 235 to 255 (VECGKEDSKGTKRKKKKNSSR). The segment covering 245–255 (TKRKKKKNSSR) has biased composition (basic residues).

In terms of assembly, component of the Set1C/COMPASS complex which consists of SET1(2), BRE2(2), SPP1(2), SDC1(1), SHG1(1), SWD1(1), SWD2(1), and SWD3(1).

It localises to the nucleus. In terms of biological role, component of the Set1C/COMPASS complex that specifically mono-, di- and trimethylates histone H3 to form H3K4me1/2/3, which subsequently plays a role in telomere length maintenance and transcription elongation regulation. COMPASS recognizes ubiquitinated H2B on one face of the nucleosome which stimulates the methylation of H3 on the opposing face. SPP1/CPS40 can recognize methylated histone lysine residue H3K4me3 or unmethylated H3K4. Stimulates the RNA binding activity of SET1. The sequence is that of COMPASS component SPP1 from Saccharomyces cerevisiae (strain ATCC 204508 / S288c) (Baker's yeast).